Reading from the N-terminus, the 660-residue chain is Acetyl-coenzyme A synthetase (660 aa).

Residues 197–200 (RGGK) and Thr317 contribute to the CoA site. Residues 397-399 (GEP), 421-426 (DTFWQT), Asp512, and Arg528 contribute to the ATP site. Residue Ser536 coordinates CoA. Arg539 is a binding site for ATP. The Mg(2+) site is built by Val550 and Val555. At Lys625 the chain carries N6-acetyllysine.

The protein belongs to the ATP-dependent AMP-binding enzyme family. It depends on Mg(2+) as a cofactor. Post-translationally, acetylated. Deacetylation by the SIR2-homolog deacetylase activates the enzyme.

The catalysed reaction is acetate + ATP + CoA = acetyl-CoA + AMP + diphosphate. In terms of biological role, catalyzes the conversion of acetate into acetyl-CoA (AcCoA), an essential intermediate at the junction of anabolic and catabolic pathways. AcsA undergoes a two-step reaction. In the first half reaction, AcsA combines acetate with ATP to form acetyl-adenylate (AcAMP) intermediate. In the second half reaction, it can then transfer the acetyl group from AcAMP to the sulfhydryl group of CoA, forming the product AcCoA. The sequence is that of Acetyl-coenzyme A synthetase from Ralstonia nicotianae (strain ATCC BAA-1114 / GMI1000) (Ralstonia solanacearum).